The chain runs to 127 residues: Modulator protein MzrA (127 aa).

Residues 1 to 11 (MRKPRVTLRHL) are Cytoplasmic-facing. A helical membrane pass occupies residues 12–31 (AWSTMLLMVLGTGMLFWSAV). Topologically, residues 32-127 (RQQESTLAIR…RLRDAPHRMG (96 aa)) are periplasmic.

It belongs to the MzrA family. Interacts with EnvZ.

Its subcellular location is the cell inner membrane. In terms of biological role, modulates the activity of the EnvZ/OmpR two-component regulatory system, probably by directly modulating EnvZ enzymatic activity and increasing stability of phosphorylated OmpR. This Citrobacter rodentium (strain ICC168) (Citrobacter freundii biotype 4280) protein is Modulator protein MzrA.